Consider the following 371-residue polypeptide: Aminomethyltransferase (371 aa).

Belongs to the GcvT family. The glycine cleavage system is composed of four proteins: P, T, L and H.

It carries out the reaction N(6)-[(R)-S(8)-aminomethyldihydrolipoyl]-L-lysyl-[protein] + (6S)-5,6,7,8-tetrahydrofolate = N(6)-[(R)-dihydrolipoyl]-L-lysyl-[protein] + (6R)-5,10-methylene-5,6,7,8-tetrahydrofolate + NH4(+). The glycine cleavage system catalyzes the degradation of glycine. The sequence is that of Aminomethyltransferase from Pectobacterium atrosepticum (strain SCRI 1043 / ATCC BAA-672) (Erwinia carotovora subsp. atroseptica).